The following is a 313-amino-acid chain: MVIRHDWSREEVRSLLDLPFPELLFRAAAIHRACFDPREVQISTLLSIKTGGCPEDCAYCPQAAQYDTGVEASRLMRVDAVLEEARAAKAAGASRFCMGAAWRSPKERDMDTVCEMIEGVKALGMESCVTLGMLTDQQALRLKQAGLDYYNHNLDTSPEYYGAVISTRTYEDRLETLAHVRDAGINVCCGGILGLGEGLDDRAGLIVALANLPRHPESVPINALVQVEGTPLKGQEPVDTIDFVRMIAVARITMPHARVRLSAGREAMTDEAQALCFLAGANSIFYGEKLLTTGNPAAERDRALLSRLGMRLV.

In terms of domain architecture, Radical SAM core spans 38-262 (REVQISTLLS…TMPHARVRLS (225 aa)). 3 residues coordinate [4Fe-4S] cluster: Cys-53, Cys-57, and Cys-60. [2Fe-2S] cluster-binding residues include Cys-97, Cys-128, Cys-188, and Arg-260.

This sequence belongs to the radical SAM superfamily. Biotin synthase family. As to quaternary structure, homodimer. Requires [4Fe-4S] cluster as cofactor. [2Fe-2S] cluster serves as cofactor.

It carries out the reaction (4R,5S)-dethiobiotin + (sulfur carrier)-SH + 2 reduced [2Fe-2S]-[ferredoxin] + 2 S-adenosyl-L-methionine = (sulfur carrier)-H + biotin + 2 5'-deoxyadenosine + 2 L-methionine + 2 oxidized [2Fe-2S]-[ferredoxin]. Its pathway is cofactor biosynthesis; biotin biosynthesis; biotin from 7,8-diaminononanoate: step 2/2. In terms of biological role, catalyzes the conversion of dethiobiotin (DTB) to biotin by the insertion of a sulfur atom into dethiobiotin via a radical-based mechanism. The protein is Biotin synthase of Granulibacter bethesdensis (strain ATCC BAA-1260 / CGDNIH1).